The primary structure comprises 416 residues: Glutamyl-tRNA reductase (416 aa).

Residues Thr-49 to Arg-52, Ser-105, Glu-110 to Gln-112, and Gln-116 contribute to the substrate site. Cys-50 serves as the catalytic Nucleophile. NADP(+) is bound at residue Gly-185–Ile-190.

The protein belongs to the glutamyl-tRNA reductase family. As to quaternary structure, homodimer.

The catalysed reaction is (S)-4-amino-5-oxopentanoate + tRNA(Glu) + NADP(+) = L-glutamyl-tRNA(Glu) + NADPH + H(+). Its pathway is porphyrin-containing compound metabolism; protoporphyrin-IX biosynthesis; 5-aminolevulinate from L-glutamyl-tRNA(Glu): step 1/2. Functionally, catalyzes the NADPH-dependent reduction of glutamyl-tRNA(Glu) to glutamate 1-semialdehyde (GSA). The chain is Glutamyl-tRNA reductase from Shewanella loihica (strain ATCC BAA-1088 / PV-4).